The sequence spans 834 residues: Probable glucan 1,3-beta-glucosidase D (834 aa).

Residues 1–33 are compositionally biased toward basic and acidic residues; sequence MPSHSRSRDRYGGRDSDREARYDYDYARRRYAT. Disordered stretches follow at residues 1 to 188 and 200 to 251; these read MPSH…ASHL and QYEK…TKAR. The Cytoplasmic portion of the chain corresponds to 1–306; that stretch reads MPSHSRSRDR…GGRPFWKRKK (306 aa). Acidic residues predominate over residues 34-45; that stretch reads DDNDDDYDDDEL. 4 stretches are compositionally biased toward basic and acidic residues: residues 46–76, 98–173, 201–218, and 228–245; these read EHGL…RDAE, YGHD…ETAA, YEKE…AAKA, and VVGE…ESHR. A helical; Signal-anchor for type II membrane protein transmembrane segment spans residues 307–327; it reads WIGLGALILILVIVIPVAVVV. Over 328-834 the chain is Extracellular; sequence SKKHDNKSDP…PDFGNLPEYY (507 aa). Positions 331–354 are disordered; that stretch reads HDNKSDPADPQGTSPGKSNLDGLS. N-linked (GlcNAc...) asparagine glycans are attached at residues Asn-333, Asn-379, Asn-384, Asn-396, Asn-549, Asn-561, and Asn-570. Glu-600 acts as the Proton donor in catalysis. N-linked (GlcNAc...) asparagine glycans are attached at residues Asn-639, Asn-672, and Asn-692. The Nucleophile role is filled by Glu-705.

It belongs to the glycosyl hydrolase 5 (cellulase A) family.

It localises to the cell membrane. The catalysed reaction is Successive hydrolysis of beta-D-glucose units from the non-reducing ends of (1-&gt;3)-beta-D-glucans, releasing alpha-glucose.. In terms of biological role, glucosidase involved in the degradation of cellulosic biomass. Active on lichenan. This Neosartorya fischeri (strain ATCC 1020 / DSM 3700 / CBS 544.65 / FGSC A1164 / JCM 1740 / NRRL 181 / WB 181) (Aspergillus fischerianus) protein is Probable glucan 1,3-beta-glucosidase D (exgD).